The chain runs to 446 residues: Probable glycine dehydrogenase (decarboxylating) subunit 1 (446 aa).

The protein belongs to the GcvP family. N-terminal subunit subfamily. As to quaternary structure, the glycine cleavage system is composed of four proteins: P, T, L and H. In this organism, the P 'protein' is a heterodimer of two subunits.

It carries out the reaction N(6)-[(R)-lipoyl]-L-lysyl-[glycine-cleavage complex H protein] + glycine + H(+) = N(6)-[(R)-S(8)-aminomethyldihydrolipoyl]-L-lysyl-[glycine-cleavage complex H protein] + CO2. Functionally, the glycine cleavage system catalyzes the degradation of glycine. The P protein binds the alpha-amino group of glycine through its pyridoxal phosphate cofactor; CO(2) is released and the remaining methylamine moiety is then transferred to the lipoamide cofactor of the H protein. This chain is Probable glycine dehydrogenase (decarboxylating) subunit 1, found in Desulfitobacterium hafniense (strain DSM 10664 / DCB-2).